The sequence spans 225 residues: O-methyltransferase rstn1 (225 aa).

S-adenosyl-L-methionine contacts are provided by glutamine 97 and histidine 142.

Belongs to the methyltransferase superfamily.

The enzyme catalyses desmethylrestrictinol + S-adenosyl-L-methionine = restrictinol + S-adenosyl-L-homocysteine + H(+). The protein operates within antifungal biosynthesis. Functionally, O-methyltransferase; part of the gene cluster that mediates the biosynthesis of the tetrahydropyranyl antifungal agent restricticin that acts as an inhibitor of CYP51 and blocks the ergosterol biosynthesis. Within the pathway, rstn1 uses S-adenosylmethionine to methylate position C4 of desmethylrestrictinol to produce restrictinol. The highly reducing polyketide synthase rstn3, the short chain dehydrogenase rstn4, the cyclase rstn5, the FAD-dependent monooxygenase rstn6 and the enoylreductase rstn7 are required to generate the first stable intermediate desmethylrestrictinol. Rstn3 with rstn7 biosynthesize the first polyketide chain intermediate that is reduced by rstn4, followed by epoxidation by rstn6 before 6-endo cyclization via epoxide opening by rstn5 leads to desmethylrestrictinol. The methyltransferase rstn1 then catalyzes the C4 O-methylation of desmethylrestrictinol to produce restrictinol, and the nonribosomal peptide synthetase rstn8 catalyzes the C3 esterification of restrictinol with glycine that leads to restricticin. This chain is O-methyltransferase rstn1, found in Aspergillus nomiae NRRL (strain ATCC 15546 / NRRL 13137 / CBS 260.88 / M93).